Reading from the N-terminus, the 823-residue chain is Molybdenum cofactor sulfurase (823 aa).

Lysine 228 is subject to N6-(pyridoxal phosphate)lysine. Cysteine 392 is a catalytic residue. A disordered region spans residues 628-667 (SSTRLAEPRRGLGSRKSPLRPAMPGAFPQDTPTPEAERNP). The 176-residue stretch at 644–819 (SPLRPAMPGA…VMVGDVVTPS (176 aa)) folds into the MOSC domain.

This sequence belongs to the class-V pyridoxal-phosphate-dependent aminotransferase family. MOCOS subfamily. Pyridoxal 5'-phosphate is required as a cofactor.

It carries out the reaction Mo-molybdopterin + L-cysteine + AH2 = thio-Mo-molybdopterin + L-alanine + A + H2O. Its pathway is cofactor biosynthesis; molybdopterin biosynthesis. In terms of biological role, sulfurates the molybdenum cofactor. Sulfation of molybdenum is essential for xanthine dehydrogenase (XDH) and aldehyde oxidase (ADO) enzymes in which molybdenum cofactor is liganded by 1 oxygen and 1 sulfur atom in active form. This chain is Molybdenum cofactor sulfurase, found in Aspergillus niger (strain ATCC MYA-4892 / CBS 513.88 / FGSC A1513).